The primary structure comprises 230 residues: Ribonuclease 3 (230 aa).

The RNase III domain occupies 10-133 (DPRLQSRIGY…IIGAIYVDSN (124 aa)). Residue E46 participates in Mg(2+) binding. D50 is an active-site residue. D119 and E122 together coordinate Mg(2+). E122 is an active-site residue. Positions 161–230 (DPKSRLQEYL…AAEILKLLEQ (70 aa)) constitute a DRBM domain.

This sequence belongs to the ribonuclease III family. In terms of assembly, homodimer. Mg(2+) serves as cofactor.

Its subcellular location is the cytoplasm. It carries out the reaction Endonucleolytic cleavage to 5'-phosphomonoester.. Digests double-stranded RNA. Involved in the processing of primary rRNA transcript to yield the immediate precursors to the large and small rRNAs (23S and 16S). Processes some mRNAs, and tRNAs when they are encoded in the rRNA operon. Processes pre-crRNA and tracrRNA of type II CRISPR loci if present in the organism. In Acinetobacter baylyi (strain ATCC 33305 / BD413 / ADP1), this protein is Ribonuclease 3.